The sequence spans 287 residues: Putative sugar uptake protein spyM18_2243 (287 aa).

Transmembrane regions (helical) follow at residues 4–26 (IFYALIPMFTWGSIGFVSNKIGG), 33–50 (LGMTFGALLFSLAVWLIV), 55–72 (TLQLWLFGILGGFIWSIG), 85–107 (VSVANPLSSGSQLVLGSLIGVLV), 117–134 (FVVGSLALLLLIVGFYFS), 154–171 (FRALTYSTIGYVMYAVLF), 181–200 (SVILPMAVGMVLGAITFMSF), 207–229 (YVIKNSVVGLLWGIGNIFMLLAA), 234–256 (LAIAFSFSQLGAIISIVGGILFL), and 268–285 (VVTGIICFIVGAILLGVV).

It belongs to the GRP transporter (TC 2.A.7.5) family.

The protein resides in the cell membrane. This Streptococcus pyogenes serotype M18 (strain MGAS8232) protein is Putative sugar uptake protein spyM18_2243.